Reading from the N-terminus, the 196-residue chain is Putative NADH dehydrogenase/NAD(P)H nitroreductase xcc-b100_0585 (196 aa).

The protein belongs to the nitroreductase family. HadB/RutE subfamily. The cofactor is FMN.

This is Putative NADH dehydrogenase/NAD(P)H nitroreductase xcc-b100_0585 from Xanthomonas campestris pv. campestris (strain B100).